A 266-amino-acid chain; its full sequence is Putative pyruvate, phosphate dikinase regulatory protein (266 aa).

Residue 149–156 (GVSRTSKT) coordinates ADP.

The protein belongs to the pyruvate, phosphate/water dikinase regulatory protein family. PDRP subfamily.

It catalyses the reaction N(tele)-phospho-L-histidyl/L-threonyl-[pyruvate, phosphate dikinase] + ADP = N(tele)-phospho-L-histidyl/O-phospho-L-threonyl-[pyruvate, phosphate dikinase] + AMP + H(+). It carries out the reaction N(tele)-phospho-L-histidyl/O-phospho-L-threonyl-[pyruvate, phosphate dikinase] + phosphate + H(+) = N(tele)-phospho-L-histidyl/L-threonyl-[pyruvate, phosphate dikinase] + diphosphate. Bifunctional serine/threonine kinase and phosphorylase involved in the regulation of the pyruvate, phosphate dikinase (PPDK) by catalyzing its phosphorylation/dephosphorylation. In Halothermothrix orenii (strain H 168 / OCM 544 / DSM 9562), this protein is Putative pyruvate, phosphate dikinase regulatory protein.